We begin with the raw amino-acid sequence, 165 residues long: Lipoprotein signal peptidase (165 aa).

2 helical membrane passes run 64–84 (LGRW…GAWM) and 88–108 (GSRL…GNAV). Active-site residues include aspartate 118 and aspartate 136. Residues 128-148 (SWYVFNVADAGIVAGVAGLLV) traverse the membrane as a helical segment.

It belongs to the peptidase A8 family.

The protein resides in the cell inner membrane. The enzyme catalyses Release of signal peptides from bacterial membrane prolipoproteins. Hydrolyzes -Xaa-Yaa-Zaa-|-(S,diacylglyceryl)Cys-, in which Xaa is hydrophobic (preferably Leu), and Yaa (Ala or Ser) and Zaa (Gly or Ala) have small, neutral side chains.. The protein operates within protein modification; lipoprotein biosynthesis (signal peptide cleavage). Its function is as follows. This protein specifically catalyzes the removal of signal peptides from prolipoproteins. The sequence is that of Lipoprotein signal peptidase from Methylobacterium sp. (strain 4-46).